Reading from the N-terminus, the 271-residue chain is Phosphatidylinositol transfer protein beta isoform (271 aa).

N6-acetyllysine is present on Lys-215. Position 262 is a phosphoserine (Ser-262).

This sequence belongs to the PtdIns transfer protein family. PI transfer class I subfamily. In terms of processing, constitutive phosphorylation of Ser-262 has no effect on phospholipid transfer activity but is required for Golgi targeting. In terms of tissue distribution, expressed abundantly in brain, kidney, liver, and lung, but in a lesser amount in testis.

It is found in the golgi apparatus. The protein resides in the golgi apparatus membrane. It localises to the endoplasmic reticulum membrane. The catalysed reaction is a 1,2-diacyl-sn-glycero-3-phosphocholine(in) = a 1,2-diacyl-sn-glycero-3-phosphocholine(out). It catalyses the reaction a 1,2-diacyl-sn-glycero-3-phospho-(1D-myo-inositol)(in) = a 1,2-diacyl-sn-glycero-3-phospho-(1D-myo-inositol)(out). It carries out the reaction an N-(acyl)-sphingosylphosphocholine(in) = an N-(acyl)-sphingosylphosphocholine(out). Phosphatidylinositol transfer activity is inhibited by N-ethylmaleimide. Its function is as follows. Catalyzes the transfer of phosphatidylinositol between membranes. Also catalyzes the transfer of phosphatidylcholine and sphingomyelin between membranes. Required for COPI-mediated retrograde transport from the Golgi to the endoplasmic reticulum; phosphatidylinositol and phosphatidylcholine transfer activity is essential for this function. The protein is Phosphatidylinositol transfer protein beta isoform (Pitpnb) of Rattus norvegicus (Rat).